We begin with the raw amino-acid sequence, 563 residues long: Arginine--tRNA ligase (563 aa).

A 'HIGH' region motif is present at residues 121–131 (PNIAKPFSIGH).

It belongs to the class-I aminoacyl-tRNA synthetase family. In terms of assembly, monomer.

Its subcellular location is the cytoplasm. The enzyme catalyses tRNA(Arg) + L-arginine + ATP = L-arginyl-tRNA(Arg) + AMP + diphosphate. This Streptococcus agalactiae serotype III (strain NEM316) protein is Arginine--tRNA ligase.